Here is a 180-residue protein sequence, read N- to C-terminus: Large ribosomal subunit protein uL5 (180 aa).

The protein belongs to the universal ribosomal protein uL5 family. As to quaternary structure, part of the 50S ribosomal subunit; part of the 5S rRNA/L5/L18/L25 subcomplex. Contacts the 5S rRNA and the P site tRNA. Forms a bridge to the 30S subunit in the 70S ribosome.

This is one of the proteins that bind and probably mediate the attachment of the 5S RNA into the large ribosomal subunit, where it forms part of the central protuberance. In the 70S ribosome it contacts protein S13 of the 30S subunit (bridge B1b), connecting the 2 subunits; this bridge is implicated in subunit movement. Contacts the P site tRNA; the 5S rRNA and some of its associated proteins might help stabilize positioning of ribosome-bound tRNAs. This is Large ribosomal subunit protein uL5 from Mesoplasma florum (strain ATCC 33453 / NBRC 100688 / NCTC 11704 / L1) (Acholeplasma florum).